Reading from the N-terminus, the 414-residue chain is Enolase (414 aa).

Glutamine 156 contacts (2R)-2-phosphoglycerate. Glutamate 200 functions as the Proton donor in the catalytic mechanism. Residues aspartate 236, glutamate 281, and aspartate 308 each coordinate Mg(2+). 4 residues coordinate (2R)-2-phosphoglycerate: lysine 333, arginine 362, serine 363, and lysine 384. Residue lysine 333 is the Proton acceptor of the active site.

The protein belongs to the enolase family. Mg(2+) is required as a cofactor.

It is found in the cytoplasm. It localises to the secreted. The protein localises to the cell surface. It carries out the reaction (2R)-2-phosphoglycerate = phosphoenolpyruvate + H2O. The protein operates within carbohydrate degradation; glycolysis; pyruvate from D-glyceraldehyde 3-phosphate: step 4/5. Catalyzes the reversible conversion of 2-phosphoglycerate (2-PG) into phosphoenolpyruvate (PEP). It is essential for the degradation of carbohydrates via glycolysis. The protein is Enolase of Methanosphaera stadtmanae (strain ATCC 43021 / DSM 3091 / JCM 11832 / MCB-3).